Reading from the N-terminus, the 198-residue chain is Chromophore lyase CpcS/CpeS 2 (198 aa).

Belongs to the CpcS/CpeS biliprotein lyase family.

It localises to the plastid. It is found in the organellar chromatophore. In terms of biological role, covalently attaches a chromophore to Cys residue(s) of phycobiliproteins. This is Chromophore lyase CpcS/CpeS 2 from Paulinella chromatophora.